The primary structure comprises 802 residues: Putative flavin carrier protein 3 (802 aa).

The first 28 residues, 1 to 28 (MRFLQVYKSSALIGLIILLASKVNLAEA), serve as a signal peptide directing secretion. The Lumenal segment spans residues 29-169 (KRKLVATSLV…YFSNGKTVSQ (141 aa)). N149 is a glycosylation site (N-linked (GlcNAc...) asparagine). A helical transmembrane segment spans residues 170–190 (IGVKWATAVVAGIGLLLSAIL). Residues 191-200 (STFGNSTAAS) lie on the Cytoplasmic side of the membrane. Residues 201–221 (HISANTMSLFLYFQSVVVVAM) traverse the membrane as a helical segment. Residues 222–229 (QHVHRVPP) lie on the Lumenal side of the membrane. Residues 230–250 (IAAAWAENLVWSMGLIRISFM) traverse the membrane as a helical segment. At 251–255 (QRIFR) the chain is on the cytoplasmic side. Residues 256–278 (WYVQSTGGTPSLYLTSTSMSVLA) traverse the membrane as a helical segment. The Lumenal segment spans residues 279–323 (QRSWQYLMELPLIKRATNVLYGNANTLIFRGIKRLGYKMGIENTS). Residue N321 is glycosylated (N-linked (GlcNAc...) asparagine). The chain crosses the membrane as a helical span at residues 324–344 (IVCTGFTFFVLCGYVLAGFII). At 345–377 (VFKCCVELATRLGWIQKARFWEFRKQWRMILKG) the chain is on the cytoplasmic side. A helical membrane pass occupies residues 378–398 (ALLRYIYIGFVQLTILSFWEF). Residues 399–405 (TERDSPA) lie on the Lumenal side of the membrane. The chain crosses the membrane as a helical span at residues 406–426 (VIVIACLFILLSCGLMLWAAW). The Cytoplasmic segment spans residues 427–467 (RTVFFARRSVALYNNPAALLYGDEYVLHKYGFFYTMFNANH). Residues 468 to 488 (YWWNIVLLSYIFVKSLLVGFA) form a helical membrane-spanning segment. Residues 489-495 (QASGQTQ) lie on the Lumenal side of the membrane. The helical transmembrane segment at 496–516 (VLFMFILDLFYFVAIIYYKPY) threads the bilayer. Residues 517–525 (LDRPTNIMN) are Cytoplasmic-facing. A helical membrane pass occupies residues 526–546 (ILIATVTVVNSFLFMFFSDLF). N547 carries an N-linked (GlcNAc...) asparagine glycan. The Lumenal portion of the chain corresponds to 547-557 (NQSYKVAAIMG). Residues 558-578 (WIFFIMNAAFSFILLMMILAF) traverse the membrane as a helical segment. The Cytoplasmic segment spans residues 579 to 802 (AGMMLFSKNP…PPGFFDEGFM (224 aa)). Residues S616 and S635 each carry the phosphoserine modification. The disordered stretch occupies residues 629–802 (KDHDDNSDYE…PPGFFDEGFM (174 aa)). Polar residues-rich tracts occupy residues 653-663 (DETTPTTVTSS), 697-717 (KQQT…STLG), and 761-788 (DTSS…NNKQ). Phosphoserine is present on residues S779 and S782.

Belongs to the transient receptor potential (TRP) ion channel family.

Its subcellular location is the endoplasmic reticulum membrane. In terms of biological role, may be responsible for the transport of FAD into the endoplasmic reticulum lumen, where it is required for oxidative protein folding. This chain is Putative flavin carrier protein 3 (FLC3), found in Saccharomyces cerevisiae (strain ATCC 204508 / S288c) (Baker's yeast).